The following is a 98-amino-acid chain: PqqA binding protein (98 aa).

This sequence belongs to the PqqD family. In terms of assembly, monomer. Interacts with PqqE.

It functions in the pathway cofactor biosynthesis; pyrroloquinoline quinone biosynthesis. Functions as a PqqA binding protein and presents PqqA to PqqE, in the pyrroloquinoline quinone (PQQ) biosynthetic pathway. In Rhizobium meliloti (strain 1021) (Ensifer meliloti), this protein is PqqA binding protein.